The sequence spans 251 residues: 5-oxoprolinase subunit A (251 aa).

This sequence belongs to the LamB/PxpA family. In terms of assembly, forms a complex composed of PxpA, PxpB and PxpC.

The catalysed reaction is 5-oxo-L-proline + ATP + 2 H2O = L-glutamate + ADP + phosphate + H(+). In terms of biological role, catalyzes the cleavage of 5-oxoproline to form L-glutamate coupled to the hydrolysis of ATP to ADP and inorganic phosphate. The polypeptide is 5-oxoprolinase subunit A (Vibrio campbellii (strain ATCC BAA-1116)).